The sequence spans 134 residues: Putative protein KRIP1 (134 aa).

A disordered region spans residues 1 to 134 (MSPVHRSRTS…PDPALPLQML (134 aa)). Composition is skewed to polar residues over residues 9-24 (TSQTQEAHKPTSTLSF), 43-55 (SQPNACSRQSHVS), and 64-79 (CSQSKVSPPGTATNPN). A compositionally biased stretch (pro residues) spans 119 to 128 (PAKPALPDPA).

As to expression, abundant expression is found in prostate, restricted to cells of epithelial origin in normal and diseased glands. Very low expression is detected in pancreas and ovary.

Its subcellular location is the cytoplasm. The protein resides in the nucleus. This Homo sapiens (Human) protein is Putative protein KRIP1 (KLKP1).